The following is a 516-amino-acid chain: Maintenance of mitochondrial morphology protein 1 (516 aa).

Residues 1 to 43 (MAGSTSASLQTPYFPSSTQINPVRVDHTLPLPPAQPSLSFTQG) are Lumenal-facing. The helical transmembrane segment at 44–64 (LLVGQLSVVLLIGAFIKFFIF) threads the bilayer. The Cytoplasmic portion of the chain corresponds to 65 to 516 (GEAPPPPSRG…GSMPDTVTET (452 aa)). Disordered stretches follow at residues 70 to 118 (PPSR…SSST), 295 to 349 (TSDQ…SKHG), 420 to 466 (RTGL…IDRG), and 485 to 516 (GGHQ…VTET). Polar residues-rich tracts occupy residues 74 to 96 (GLSN…TDSS), 105 to 118 (STSN…SSST), and 295 to 312 (TSDQ…TTSE). The SMP-LTD domain occupies 151–412 (QPESLDWFNV…EPRVQVVGLP (262 aa)). Gly residues predominate over residues 449-460 (GVSGGGGGGGSM).

Belongs to the MMM1 family. As to quaternary structure, homodimer. Component of the ER-mitochondria encounter structure (ERMES) or MDM complex, composed of MMM1, MDM10, MDM12 and MDM34. An MMM1 homodimer associates with one molecule of MDM12 on each side in a pairwise head-to-tail manner, and the SMP-LTD domains of MMM1 and MDM12 generate a continuous hydrophobic tunnel for phospholipid trafficking.

The protein localises to the endoplasmic reticulum membrane. Its function is as follows. Component of the ERMES/MDM complex, which serves as a molecular tether to connect the endoplasmic reticulum (ER) and mitochondria. Components of this complex are involved in the control of mitochondrial shape and protein biogenesis, and function in nonvesicular lipid trafficking between the ER and mitochondria. The MDM12-MMM1 subcomplex functions in the major beta-barrel assembly pathway that is responsible for biogenesis of all outer membrane beta-barrel proteins, and acts in a late step after the SAM complex. The MDM10-MDM12-MMM1 subcomplex further acts in the TOM40-specific pathway after the action of the MDM12-MMM1 complex. Essential for establishing and maintaining the structure of mitochondria and maintenance of mtDNA nucleoids. The sequence is that of Maintenance of mitochondrial morphology protein 1 from Paracoccidioides brasiliensis (strain Pb18).